The sequence spans 145 residues: Probable D-aminoacyl-tRNA deacylase (145 aa).

Belongs to the DTD family. Homodimer.

It is found in the cytoplasm. It carries out the reaction glycyl-tRNA(Ala) + H2O = tRNA(Ala) + glycine + H(+). It catalyses the reaction a D-aminoacyl-tRNA + H2O = a tRNA + a D-alpha-amino acid + H(+). Its function is as follows. An aminoacyl-tRNA editing enzyme that deacylates mischarged D-aminoacyl-tRNAs. Also deacylates mischarged glycyl-tRNA(Ala), protecting cells against glycine mischarging by AlaRS. Acts via tRNA-based rather than protein-based catalysis; rejects L-amino acids rather than detecting D-amino acids in the active site. By recycling D-aminoacyl-tRNA to D-amino acids and free tRNA molecules, this enzyme counteracts the toxicity associated with the formation of D-aminoacyl-tRNA entities in vivo and helps enforce protein L-homochirality. The chain is Probable D-aminoacyl-tRNA deacylase from Shigella flexneri serotype 5b (strain 8401).